The chain runs to 306 residues: Polyphosphate kinase PPK2B (306 aa).

Belongs to the polyphosphate kinase 2 (PPK2) family. Class I subfamily. Homotetramer. Mn(2+) is required as a cofactor.

It catalyses the reaction [phosphate](n) + ATP = [phosphate](n+1) + ADP. It carries out the reaction [phosphate](n) + GTP = [phosphate](n+1) + GDP. Functionally, catalyzes the synthesis of polyP from ATP or GTP. Can also use inorganic polyphosphate (polyP) as a donor to convert ADP to ATP, but the activity is 10-fold higher in vitro for polyP synthesis than for ATP formation. The protein is Polyphosphate kinase PPK2B of Corynebacterium glutamicum (strain ATCC 13032 / DSM 20300 / JCM 1318 / BCRC 11384 / CCUG 27702 / LMG 3730 / NBRC 12168 / NCIMB 10025 / NRRL B-2784 / 534).